Consider the following 210-residue polypeptide: Orotate phosphoribosyltransferase (210 aa).

5-phospho-alpha-D-ribose 1-diphosphate is bound by residues Arg-97, Lys-101, His-103, and 123–131 (EDLISTGGS). Position 127 (Ser-127) interacts with orotate.

It belongs to the purine/pyrimidine phosphoribosyltransferase family. PyrE subfamily. As to quaternary structure, homodimer. Mg(2+) is required as a cofactor.

It catalyses the reaction orotidine 5'-phosphate + diphosphate = orotate + 5-phospho-alpha-D-ribose 1-diphosphate. The protein operates within pyrimidine metabolism; UMP biosynthesis via de novo pathway; UMP from orotate: step 1/2. Its function is as follows. Catalyzes the transfer of a ribosyl phosphate group from 5-phosphoribose 1-diphosphate to orotate, leading to the formation of orotidine monophosphate (OMP). The sequence is that of Orotate phosphoribosyltransferase from Porphyromonas gingivalis (strain ATCC BAA-308 / W83).